The primary structure comprises 245 residues: 5-oxoprolinase subunit A (245 aa).

This sequence belongs to the LamB/PxpA family. In terms of assembly, forms a complex composed of PxpA, PxpB and PxpC.

It catalyses the reaction 5-oxo-L-proline + ATP + 2 H2O = L-glutamate + ADP + phosphate + H(+). In terms of biological role, catalyzes the cleavage of 5-oxoproline to form L-glutamate coupled to the hydrolysis of ATP to ADP and inorganic phosphate. The protein is 5-oxoprolinase subunit A of Erwinia tasmaniensis (strain DSM 17950 / CFBP 7177 / CIP 109463 / NCPPB 4357 / Et1/99).